The following is a 427-amino-acid chain: MSTSFENKATNRGVITFTISQDKIKPALDQAFNKIKKDLNAPGFRKGHMPRPVFNQRFGEEVLYEEALNIVLPAAYEGAVAELELDVVAQPKIDVVSMEKGQEWTLTAEVVTKPEVKLGDYKDLTVEVEASKEVTDEEVDAKVERERNNLAELVVKEEAAVEGDTVVIDFVGSVDGVEFDGGKGDNFSLELGSGQFIPGFEEQLVGAKAGDTVEVNVTFPENYQAEDLAGKAAKFVTTVHEVKAKEVPELDDELAKDIDEEVETLDELKAKYRKELEASKEAAYDDALEGAAIELAVENAEIVELPEEMVHDEVHRSVNEFMASMQRQGISPDMYFQLTGTSQEDLHKQHEAEADKRVKTNLVIEAIAKAEGFEASDDEIEKEINDLAAEYSMPVEQVRSLLSADMLKHDIVMKKAVEVITSSAKAK.

Residues 163 to 248 enclose the PPIase FKBP-type domain; it reads GDTVVIDFVG…VHEVKAKEVP (86 aa).

The protein belongs to the FKBP-type PPIase family. Tig subfamily.

Its subcellular location is the cytoplasm. It catalyses the reaction [protein]-peptidylproline (omega=180) = [protein]-peptidylproline (omega=0). Its function is as follows. Involved in protein export. Acts as a chaperone by maintaining the newly synthesized protein in an open conformation. Functions as a peptidyl-prolyl cis-trans isomerase. This is Trigger factor from Streptococcus equi subsp. zooepidemicus (strain MGCS10565).